Here is a 264-residue protein sequence, read N- to C-terminus: MAATGEALTPQGYIQHHLTNLSVGEGFWTWHIDSLFFSVGLGVLFLWIFRSVGKKATSGVPGKLQCFVEMIVEFVNNSVKESFHGRNALIAPLALTIFVWVFMMNFMDMIPVDWLPHAASLMGIPYLKAVPTTDVNITFSLAIGVFLLIIFYSIKVKGVSGFVKELTLQPFNHKAMIPVNLLLETVTLIAKPISLALRLFGNLYAGELIFILIALMYGTNLLLSTLGVTLQLGWLIFHILVITLQAFIFMMLTIVYLSMAHEDH.

6 consecutive transmembrane segments (helical) span residues 29–49 (TWHIDSLFFSVGLGVLFLWIF), 90–110 (IAPLALTIFVWVFMMNFMDMI), 134–154 (DVNITFSLAIGVFLLIIFYSI), 177–197 (IPVNLLLETVTLIAKPISLAL), 208–228 (LIFILIALMYGTNLLLSTLGV), and 235–255 (LIFHILVITLQAFIFMMLTIV).

It belongs to the ATPase A chain family. F-type ATPases have 2 components, CF(1) - the catalytic core - and CF(0) - the membrane proton channel. CF(1) has five subunits: alpha(3), beta(3), gamma(1), delta(1), epsilon(1). CF(0) has three main subunits: a(1), b(2) and c(9-12). The alpha and beta chains form an alternating ring which encloses part of the gamma chain. CF(1) is attached to CF(0) by a central stalk formed by the gamma and epsilon chains, while a peripheral stalk is formed by the delta and b chains.

It is found in the cell inner membrane. Its function is as follows. Key component of the proton channel; it plays a direct role in the translocation of protons across the membrane. The protein is ATP synthase subunit a of Shewanella baltica (strain OS223).